Here is a 263-residue protein sequence, read N- to C-terminus: tRNA (guanine-N(7)-)-methyltransferase (263 aa).

Positions 1 to 33 (MSDHGRMHSTGSEVAAPVAPDPDTEGVHPHFNR) are disordered. Positions 89, 114, 146, and 169 each coordinate S-adenosyl-L-methionine. D169 is an active-site residue. Residues K173, D205, and 242-245 (TKYE) contribute to the substrate site.

This sequence belongs to the class I-like SAM-binding methyltransferase superfamily. TrmB family.

The catalysed reaction is guanosine(46) in tRNA + S-adenosyl-L-methionine = N(7)-methylguanosine(46) in tRNA + S-adenosyl-L-homocysteine. Its pathway is tRNA modification; N(7)-methylguanine-tRNA biosynthesis. Catalyzes the formation of N(7)-methylguanine at position 46 (m7G46) in tRNA. In Mycolicibacterium gilvum (strain PYR-GCK) (Mycobacterium gilvum (strain PYR-GCK)), this protein is tRNA (guanine-N(7)-)-methyltransferase.